A 150-amino-acid chain; its full sequence is Protein NrdI (150 aa).

The protein belongs to the NrdI family.

In terms of biological role, probably involved in ribonucleotide reductase function. In Mycobacterium avium (strain 104), this protein is Protein NrdI.